We begin with the raw amino-acid sequence, 40 residues long: Light-harvesting protein B800/830/1020 beta-1 chain (40 aa).

At 1 to 20 (ANDIRPLRDFEDEEAQEFHQ) the chain is on the cytoplasmic side. 2 residues coordinate a bacteriochlorophyll: H19 and H37. The helical transmembrane segment at 21–40 (AAVQAFFLYVAVAFVAHLPV) threads the bilayer.

Belongs to the antenna complex beta subunit family. As to quaternary structure, the core complex is formed by different alpha and beta chains, binding bacteriochlorophyll molecules, and arranged most probably in tetrameric structures disposed around the reaction center. The non-pigmented gamma chains may constitute additional components.

The protein resides in the cell inner membrane. Functionally, antenna complexes are light-harvesting systems, which transfer the excitation energy to the reaction centers. The chain is Light-harvesting protein B800/830/1020 beta-1 chain from Halorhodospira halochloris (Ectothiorhodospira halochloris).